The following is a 439-amino-acid chain: Chaperone SurA (439 aa).

The signal sequence occupies residues 1 to 27; it reads MRRISSRLSLVLFAALSCATALFPAHA. 2 consecutive PpiC domains span residues 180–281 and 293–391; these read GEEF…KLLD and LEQT…QVEA.

The protein localises to the periplasm. It catalyses the reaction [protein]-peptidylproline (omega=180) = [protein]-peptidylproline (omega=0). Functionally, chaperone involved in the correct folding and assembly of outer membrane proteins. Recognizes specific patterns of aromatic residues and the orientation of their side chains, which are found more frequently in integral outer membrane proteins. May act in both early periplasmic and late outer membrane-associated steps of protein maturation. The polypeptide is Chaperone SurA (Aromatoleum aromaticum (strain DSM 19018 / LMG 30748 / EbN1) (Azoarcus sp. (strain EbN1))).